The primary structure comprises 66 residues: Large ribosomal subunit protein bL33c (66 aa).

The protein belongs to the bacterial ribosomal protein bL33 family.

The protein localises to the plastid. It localises to the chloroplast. The sequence is that of Large ribosomal subunit protein bL33c from Lotus japonicus (Lotus corniculatus var. japonicus).